A 210-amino-acid polypeptide reads, in one-letter code: Pyridoxine/pyridoxamine 5'-phosphate oxidase (210 aa).

Substrate is bound by residues 7–10 (REDY) and K65. Residues 60–65 (RMVLLK), 75–76 (FT), R81, K82, and Q104 contribute to the FMN site. Substrate contacts are provided by Y122, R126, and S130. FMN contacts are provided by residues 139–140 (QS) and W183. 189 to 191 (RLH) provides a ligand contact to substrate. R193 provides a ligand contact to FMN.

The protein belongs to the pyridoxamine 5'-phosphate oxidase family. In terms of assembly, homodimer. FMN serves as cofactor.

The enzyme catalyses pyridoxamine 5'-phosphate + O2 + H2O = pyridoxal 5'-phosphate + H2O2 + NH4(+). It catalyses the reaction pyridoxine 5'-phosphate + O2 = pyridoxal 5'-phosphate + H2O2. It participates in cofactor metabolism; pyridoxal 5'-phosphate salvage; pyridoxal 5'-phosphate from pyridoxamine 5'-phosphate: step 1/1. Its pathway is cofactor metabolism; pyridoxal 5'-phosphate salvage; pyridoxal 5'-phosphate from pyridoxine 5'-phosphate: step 1/1. In terms of biological role, catalyzes the oxidation of either pyridoxine 5'-phosphate (PNP) or pyridoxamine 5'-phosphate (PMP) into pyridoxal 5'-phosphate (PLP). The sequence is that of Pyridoxine/pyridoxamine 5'-phosphate oxidase from Neisseria gonorrhoeae (strain ATCC 700825 / FA 1090).